The sequence spans 440 residues: L-gulonolactone oxidase (440 aa).

The FAD-binding PCMH-type domain occupies 17–187 (YGCSPEMYYQ…LTVTLQCVPQ (171 aa)). A Pros-8alpha-FAD histidine modification is found at His54. The chain crosses the membrane as a helical span at residues 251–273 (IGFYLLEFLLWTSTYLPRLVGWI).

Belongs to the oxygen-dependent FAD-linked oxidoreductase family. FAD is required as a cofactor. Highly expressed in liver.

It localises to the microsome membrane. Its subcellular location is the endoplasmic reticulum membrane. It catalyses the reaction L-gulono-1,4-lactone + O2 = L-ascorbate + H2O2 + H(+). It participates in cofactor biosynthesis; L-ascorbate biosynthesis via UDP-alpha-D-glucuronate pathway; L-ascorbate from UDP-alpha-D-glucuronate: step 4/4. Functionally, oxidizes L-gulono-1,4-lactone to hydrogen peroxide and L-xylo-hexulonolactone which spontaneously isomerizes to L-ascorbate. The polypeptide is L-gulonolactone oxidase (Gulo) (Mus musculus (Mouse)).